The sequence spans 440 residues: Phosphatidylglycerol--prolipoprotein diacylglyceryl transferase (440 aa).

4 helical membrane-spanning segments follow: residues 21 to 41, 53 to 73, 96 to 116, and 122 to 142; these read VPIR…LLIG, GVIY…GRLY, IWDG…GAWI, and GIPL…AQAI. An a 1,2-diacyl-sn-glycero-3-phospho-(1'-sn-glycerol)-binding site is contributed by Arg-144. 2 consecutive transmembrane segments (helical) span residues 189–209 and 256–276; these read VALV…LIFV and INSF…MAAP. A disordered region spans residues 280–440; it reads EDPESLRGNQ…ARLRDRLSGR (161 aa). Low complexity predominate over residues 299–330; sequence EPATVAATTEAATEGVAAPADGAEAAGADATA. The segment covering 332–346 has biased composition (basic and acidic residues); sequence RPEESAEPDVEKPES. Over residues 347 to 417 the composition is skewed to acidic residues; sequence EETEAEAAEE…PEQPVAEEPE (71 aa). Basic and acidic residues predominate over residues 424 to 440; the sequence is ETKRRWGARLRDRLSGR.

This sequence belongs to the Lgt family.

The protein resides in the cell membrane. It carries out the reaction L-cysteinyl-[prolipoprotein] + a 1,2-diacyl-sn-glycero-3-phospho-(1'-sn-glycerol) = an S-1,2-diacyl-sn-glyceryl-L-cysteinyl-[prolipoprotein] + sn-glycerol 1-phosphate + H(+). The protein operates within protein modification; lipoprotein biosynthesis (diacylglyceryl transfer). Catalyzes the transfer of the diacylglyceryl group from phosphatidylglycerol to the sulfhydryl group of the N-terminal cysteine of a prolipoprotein, the first step in the formation of mature lipoproteins. In Mycobacterium avium (strain 104), this protein is Phosphatidylglycerol--prolipoprotein diacylglyceryl transferase.